Reading from the N-terminus, the 468-residue chain is Envelope glycoprotein C (468 aa).

Residues 1-30 (MWLPNLVRFVAVAYLICAGAILTYASGASA) form the signal peptide. Low complexity predominate over residues 31-50 (SSSQSTPATPTHTTPNLTTA). The interval 31–73 (SSSQSTPATPTHTTPNLTTAHGAGSDNTTNANGTESTHSHETT) is disordered. Over 31–431 (SSSQSTPATP…IVEDRPVLTS (401 aa)) the chain is Virion surface. N-linked (GlcNAc...) asparagine; by host glycans are attached at residues asparagine 46, asparagine 57, asparagine 62, asparagine 92, asparagine 100, asparagine 131, asparagine 203, asparagine 208, and asparagine 269. Cysteine 76 and cysteine 93 are joined by a disulfide. Ig-like domains are found at residues 220-311 (PLLD…DEVS) and 321-416 (PSVF…DTVV). 3 disulfides stabilise this stretch: cysteine 239–cysteine 301, cysteine 340–cysteine 399, and cysteine 344–cysteine 373. Residues 432 to 451 (IIAVTCGAAALALVVLITAV) form a helical membrane-spanning segment. The Cytoplasmic portion of the chain corresponds to 452–468 (CFYCSKPSQAPYKKSDF).

The protein belongs to the herpesviridae glycoprotein C family. In terms of assembly, interacts with host complement component C3; this interaction inhibits host immune response by disregulating complement cascade.

It is found in the virion membrane. Essential for the initial attachment to heparan sulfate moieties of the host cell surface proteoglycans. Also plays a role in host immune evasion by inhibiting the host complement cascade activation. This is Envelope glycoprotein C (gC) from Equus caballus (Horse).